The chain runs to 841 residues: Probable outer membrane usher protein EcpC (841 aa).

The signal sequence occupies residues 1 to 29 (MPLRRFSPGLKAQFAFGMVFLFVQPDASA).

Belongs to the EcpC/MatD family.

In terms of biological role, part of the ecpRABCDE operon, which encodes the E.coli common pilus (ECP). ECP is found in both commensal and pathogenic strains and plays a dual role in early-stage biofilm development and host cell recognition. The chain is Probable outer membrane usher protein EcpC (ecpC) from Escherichia coli O127:H6 (strain E2348/69 / EPEC).